Consider the following 505-residue polypeptide: tRNA-2-methylthio-N(6)-dimethylallyladenosine synthase (505 aa).

The MTTase N-terminal domain maps to 10 to 126 (RSYEVRTYGC…LPALLDRARH (117 aa)). [4Fe-4S] cluster-binding residues include C19, C55, C89, C163, C167, and C170. Residues 149 to 385 (RESAYAGWVS…IALQEQITLE (237 aa)) enclose the Radical SAM core domain. One can recognise a TRAM domain in the interval 388-459 (QKLVGAEVEL…PHHLVADTPV (72 aa)).

This sequence belongs to the methylthiotransferase family. MiaB subfamily. As to quaternary structure, monomer. [4Fe-4S] cluster is required as a cofactor.

Its subcellular location is the cytoplasm. The catalysed reaction is N(6)-dimethylallyladenosine(37) in tRNA + (sulfur carrier)-SH + AH2 + 2 S-adenosyl-L-methionine = 2-methylsulfanyl-N(6)-dimethylallyladenosine(37) in tRNA + (sulfur carrier)-H + 5'-deoxyadenosine + L-methionine + A + S-adenosyl-L-homocysteine + 2 H(+). Its function is as follows. Catalyzes the methylthiolation of N6-(dimethylallyl)adenosine (i(6)A), leading to the formation of 2-methylthio-N6-(dimethylallyl)adenosine (ms(2)i(6)A) at position 37 in tRNAs that read codons beginning with uridine. The protein is tRNA-2-methylthio-N(6)-dimethylallyladenosine synthase of Rhodococcus jostii (strain RHA1).